The following is a 184-amino-acid chain: GMP synthase [glutamine-hydrolyzing] subunit A (184 aa).

Residues 3 to 184 (HIAVIDNHGQ…VFKNFIARCQ (182 aa)) enclose the Glutamine amidotransferase type-1 domain. Cys75 serves as the catalytic Nucleophile. Catalysis depends on residues His163 and Glu165.

As to quaternary structure, heterodimer composed of a glutamine amidotransferase subunit (A) and a GMP-binding subunit (B).

It carries out the reaction XMP + L-glutamine + ATP + H2O = GMP + L-glutamate + AMP + diphosphate + 2 H(+). Its pathway is purine metabolism; GMP biosynthesis; GMP from XMP (L-Gln route): step 1/1. Catalyzes the synthesis of GMP from XMP. This chain is GMP synthase [glutamine-hydrolyzing] subunit A, found in Haloquadratum walsbyi (strain DSM 16790 / HBSQ001).